We begin with the raw amino-acid sequence, 382 residues long: S-adenosylmethionine synthase (382 aa).

An ATP-binding site is contributed by H14. A Mg(2+)-binding site is contributed by D16. E42 provides a ligand contact to K(+). Positions 55 and 91 each coordinate L-methionine. The flexible loop stretch occupies residues 91–101 (QSENIAMGVNL). ATP-binding positions include 156–158 (DMK), 222–223 (KF), D231, 237–238 (RK), A254, and K258. D231 contacts L-methionine. K262 serves as a coordination point for L-methionine.

The protein belongs to the AdoMet synthase family. In terms of assembly, homotetramer; dimer of dimers. The cofactor is Mg(2+). K(+) serves as cofactor.

The protein resides in the cytoplasm. The catalysed reaction is L-methionine + ATP + H2O = S-adenosyl-L-methionine + phosphate + diphosphate. It functions in the pathway amino-acid biosynthesis; S-adenosyl-L-methionine biosynthesis; S-adenosyl-L-methionine from L-methionine: step 1/1. Functionally, catalyzes the formation of S-adenosylmethionine (AdoMet) from methionine and ATP. The overall synthetic reaction is composed of two sequential steps, AdoMet formation and the subsequent tripolyphosphate hydrolysis which occurs prior to release of AdoMet from the enzyme. This chain is S-adenosylmethionine synthase, found in Mycoplasmopsis synoviae (strain 53) (Mycoplasma synoviae).